The chain runs to 551 residues: Palmdelphin (551 aa).

An N-acetylmethionine modification is found at Met-1. Positions 12-106 (QAITDKRKIQ…LQISANEEAI (95 aa)) form a coiled coil. Lys-125 is covalently cross-linked (Glycyl lysine isopeptide (Lys-Gly) (interchain with G-Cter in SUMO2)). The residue at position 135 (Ser-135) is a Phosphoserine. Lys-178 participates in a covalent cross-link: Glycyl lysine isopeptide (Lys-Gly) (interchain with G-Cter in SUMO1); alternate. Residue Lys-178 forms a Glycyl lysine isopeptide (Lys-Gly) (interchain with G-Cter in SUMO2); alternate linkage. A compositionally biased stretch (basic and acidic residues) spans 247–258 (ERNSKSPTEYHE). The segment at 247-266 (ERNSKSPTEYHEPVYANPFC) is disordered. Thr-270 carries the post-translational modification Phosphothreonine. Disordered stretches follow at residues 294–390 (LGNH…TCQE) and 451–533 (AEDN…GTED). A phosphoserine mark is found at Ser-321 and Ser-349. The span at 341–353 (HTQQKRMASPWEE) shows a compositional bias: polar residues. The segment covering 354–365 (SSNRQNEHEVSP) has biased composition (basic and acidic residues). Phosphoserine is present on residues Ser-370, Ser-375, Ser-384, Ser-385, Ser-498, Ser-515, and Ser-520.

It belongs to the paralemmin family. As to quaternary structure, interacts with GLUL. Post-translationally, phosphorylated. Ubiquitous. Expressed at highest levels in the heart and lung.

The protein localises to the cytoplasm. It is found in the cell projection. Its subcellular location is the dendrite. It localises to the dendritic spine. This chain is Palmdelphin (Palmd), found in Mus musculus (Mouse).